The chain runs to 121 residues: MVNAIEAFDAKHMKPAEEIPAFRPGDTVEVNVKIKEGNNSRIQAFTGVVIARQGGGVRETFVVRKISFGTGVERRFPLHSPAIDSIKVVRKGRVRRAKLYYLRNLRGKAARIVERRDNSEK.

Belongs to the bacterial ribosomal protein bL19 family.

Its function is as follows. This protein is located at the 30S-50S ribosomal subunit interface and may play a role in the structure and function of the aminoacyl-tRNA binding site. The sequence is that of Large ribosomal subunit protein bL19 from Bifidobacterium adolescentis (strain ATCC 15703 / DSM 20083 / NCTC 11814 / E194a).